The primary structure comprises 172 residues: 3-phenylpropionate/cinnamic acid dioxygenase subunit beta (172 aa).

The protein belongs to the bacterial ring-hydroxylating dioxygenase beta subunit family. This dioxygenase system consists of four proteins: the two subunits of the hydroxylase component (HcaE and HcaF), a ferredoxin (HcaC) and a ferredoxin reductase (HcaD).

The catalysed reaction is 3-phenylpropanoate + NADH + O2 + H(+) = 3-(cis-5,6-dihydroxycyclohexa-1,3-dien-1-yl)propanoate + NAD(+). It catalyses the reaction (E)-cinnamate + NADH + O2 + H(+) = (2E)-3-(cis-5,6-dihydroxycyclohexa-1,3-dien-1-yl)prop-2-enoate + NAD(+). It participates in aromatic compound metabolism; 3-phenylpropanoate degradation. Functionally, part of the multicomponent 3-phenylpropionate dioxygenase. Converts 3-phenylpropionic acid (PP) and cinnamic acid (CI) into 3-phenylpropionate-dihydrodiol (PP-dihydrodiol) and cinnamic acid-dihydrodiol (CI-dihydrodiol), respectively. In Shigella flexneri serotype 5b (strain 8401), this protein is 3-phenylpropionate/cinnamic acid dioxygenase subunit beta.